Here is a 148-residue protein sequence, read N- to C-terminus: Ribonuclease H (148 aa).

One can recognise an RNase H type-1 domain in the interval 2 to 143 (TADIIYIYSD…ADVLANQGVL (142 aa)). Residues D11, E49, D71, and D135 each contribute to the Mg(2+) site.

The protein belongs to the RNase H family. In terms of assembly, monomer. Mg(2+) serves as cofactor.

It localises to the cytoplasm. It catalyses the reaction Endonucleolytic cleavage to 5'-phosphomonoester.. Its function is as follows. Endonuclease that specifically degrades the RNA of RNA-DNA hybrids. This is Ribonuclease H from Thiobacillus denitrificans (strain ATCC 25259 / T1).